The primary structure comprises 223 residues: Large ribosomal subunit protein bL25 (223 aa).

A disordered region spans residues 198–223; that stretch reads EEIGDRPRSAEEGAAPVKERKLRESE.

Belongs to the bacterial ribosomal protein bL25 family. CTC subfamily. In terms of assembly, part of the 50S ribosomal subunit; part of the 5S rRNA/L5/L18/L25 subcomplex. Contacts the 5S rRNA. Binds to the 5S rRNA independently of L5 and L18.

This is one of the proteins that binds to the 5S RNA in the ribosome where it forms part of the central protuberance. The polypeptide is Large ribosomal subunit protein bL25 (Thermomicrobium roseum (strain ATCC 27502 / DSM 5159 / P-2)).